We begin with the raw amino-acid sequence, 598 residues long: Integrator complex subunit 11 (598 aa).

Positions 68, 70, 72, 73, 157, and 178 each coordinate Zn(2+). The short motif at 68–73 (HFHLDH) is the HXHXDH motif element. Residue Glu203 is part of the active site. His414 contributes to the Zn(2+) binding site. The short motif at 470–480 (PLPDAKRPRTM) is the Nuclear localization signal element.

Belongs to the metallo-beta-lactamase superfamily. RNA-metabolizing metallo-beta-lactamase-like family. INTS11 subfamily. As to quaternary structure, component of the Integrator complex, composed of core subunits INTS1, INTS2, INTS3, INTS4, INTS5, INTS6, INTS7, INTS8, INTS9/RC74, INTS10, INTS11/CPSF3L, INTS12, INTS13, INTS14 and INTS15. The core complex associates with protein phosphatase 2A subunits PPP2CA and PPP2R1A, to form the Integrator-PP2A (INTAC) complex. INTS11 is part of the RNA endonuclease subcomplex, composed of INTS4, INTS9, INTS11 and inositol hexakisphosphate (InsP6). It depends on Zn(2+) as a cofactor.

It is found in the nucleus. Its subcellular location is the cytoplasm. Functionally, RNA endonuclease component of the integrator complex, a multiprotein complex that terminates RNA polymerase II (Pol II) transcription in the promoter-proximal region of genes. The integrator complex provides a quality checkpoint during transcription elongation by driving premature transcription termination of transcripts that are unfavorably configured for transcriptional elongation: the complex terminates transcription by (1) catalyzing dephosphorylation of the C-terminal domain (CTD) of Pol II subunit POLR2A/RPB1 and SUPT5H/SPT5, (2) degrading the exiting nascent RNA transcript via endonuclease activity and (3) promoting the release of Pol II from bound DNA. The integrator complex is also involved in terminating the synthesis of non-coding Pol II transcripts, such as enhancer RNAs (eRNAs), small nuclear RNAs (snRNAs), telomerase RNAs and long non-coding RNAs (lncRNAs). Within the integrator complex, INTS11 constitutes the RNA endonuclease subunit that degrades exiting nascent RNA transcripts. This Danio rerio (Zebrafish) protein is Integrator complex subunit 11 (cpsf3l).